The chain runs to 137 residues: Large ribosomal subunit protein uL16 (137 aa).

The protein belongs to the universal ribosomal protein uL16 family. As to quaternary structure, part of the 50S ribosomal subunit.

Binds 23S rRNA and is also seen to make contacts with the A and possibly P site tRNAs. This Mesoplasma florum (strain ATCC 33453 / NBRC 100688 / NCTC 11704 / L1) (Acholeplasma florum) protein is Large ribosomal subunit protein uL16.